A 147-amino-acid chain; its full sequence is Small ribosomal subunit protein bS16 (147 aa).

The tract at residues 81–147 (QKFTGDTSPS…GDNSGEKAEA (67 aa)) is disordered. Basic and acidic residues-rich tracts occupy residues 95-104 (QPERPNKDDL) and 114-125 (EAPREAITKKSE). Positions 126-140 (GAAADEASESAAGDN) are enriched in low complexity.

It belongs to the bacterial ribosomal protein bS16 family.

This Cutibacterium acnes (strain DSM 16379 / KPA171202) (Propionibacterium acnes) protein is Small ribosomal subunit protein bS16.